The primary structure comprises 276 residues: Melibiose/raffinose/stachyose import permease protein MelC (276 aa).

Transmembrane regions (helical) follow at residues Ile11 to Leu31, Ile74 to Leu94, Ala104 to Leu124, Ile139 to Phe159, Ile186 to Ile206, and Leu240 to Ala260. Residues Phe69–Leu261 form the ABC transmembrane type-1 domain.

It belongs to the binding-protein-dependent transport system permease family. The complex is composed of two ATP-binding proteins (MsmX), two transmembrane proteins (MelC and MelD) and a solute-binding protein (MelE).

Its subcellular location is the cell membrane. In terms of biological role, part of the ABC transporter complex MelEDC-MsmX involved in melibiose, raffinose and stachyose import. Probably responsible for the translocation of the substrate across the membrane. This is Melibiose/raffinose/stachyose import permease protein MelC from Bacillus subtilis (strain 168).